A 353-amino-acid polypeptide reads, in one-letter code: Tsukushi (353 aa).

Residues 1 to 17 (MLCTLFLLLLALGIVQT) form the signal peptide. In terms of domain architecture, LRRNT spans 18-59 (TRPCFPGCQCEEETFGLFDSFSLIRVDCSSLGPHIVPVPIPL). LRR repeat units lie at residues 60-80 (DTAH…SVLG), 86-107 (TLAG…AFSR), 110-131 (YLES…VFTS), 133-154 (PLSD…AFTT), 160-180 (ALHV…PARA), 186-207 (TIQS…RDLP), 208-228 (LRYL…AFMG), 231-253 (GLTH…GFRE), 256-277 (GLQV…EVFS), and 281-302 (LLQE…LLHH). An N-linked (GlcNAc...) asparagine glycan is attached at Asn75. A glycan (N-linked (GlcNAc...) asparagine) is linked at Asn138. Asn191 is a glycosylation site (N-linked (GlcNAc...) asparagine).

As to quaternary structure, interacts with FZD4 (via FZ domain); competes with WNT2B for binding to FZD4, inhibiting Wnt signaling and repressing peripheral eye development. Interacts with TGFB1; the interaction contributes to regulation of the hair cycle. Interacts with netrin. Interacts with CCN2. As to expression, expressed at high levels in the liver, small intestine and placenta. Not or barely detectable in other tissues, including whole pancreas, adipose tissues, skeletal muscle, kidney, spleen, brain, lung and testis.

It localises to the secreted. Its function is as follows. Contributes to various developmental events and other processes such as wound healing and cholesterol homeostasis through its interactions with multiple signaling pathways. Wnt signaling inhibitor which competes with WNT2B for binding to Wnt receptor FZD4 and represses WNT2B-dependent development of the peripheral eye. Plays a role in regulating the hair cycle by controlling TGFB1 signaling. Required for the development of the anterior commissure in the brain by inhibiting neurite outgrowth. Essential for terminal differentiation of hippocampal neural stem cells. Plays a role in regulating bone elongation and bone mass by modulating growth plate chondrocyte function and overall body size. Required for development of the inner ear through its involvement in stereocilia formation in inner hair cells. Facilitates wound healing by inhibiting secretion of TGFB1 from macrophages which prevents myofibroblast differentiation, maintaining inflammatory cell quiescence. Plays a role in cholesterol homeostasis by reducing circulating high-density lipoprotein cholesterol, lowering cholesterol efflux capacity and decreasing cholesterol-to-bile acid conversion in the liver. In one study, shown to negatively regulate sympathetic innervation in brown fat, leading to reduced energy expenditure. In another study, shown not to affect brown fat thermogenic capacity, body weight gain or glucose homeostasis. In Rattus norvegicus (Rat), this protein is Tsukushi (Tsku).